Here is a 467-residue protein sequence, read N- to C-terminus: Probable citrate synthase 1, mitochondrial (467 aa).

Active-site residues include H303, H349, and D404.

This sequence belongs to the citrate synthase family. In terms of assembly, homodimer.

It is found in the mitochondrion matrix. It carries out the reaction oxaloacetate + acetyl-CoA + H2O = citrate + CoA + H(+). The protein operates within carbohydrate metabolism; tricarboxylic acid cycle; isocitrate from oxaloacetate: step 1/2. This Aedes aegypti (Yellowfever mosquito) protein is Probable citrate synthase 1, mitochondrial.